Here is a 427-residue protein sequence, read N- to C-terminus: Transcobalamin-2 (427 aa).

A signal peptide spans 1-18 (MELLKALLLLSGVLGALA). Disulfide bonds link Cys-21–Cys-268, Cys-116–Cys-310, and Cys-165–Cys-208. Residues 152 to 156 (TSYYQ), His-193, 193 to 197 (HLSVD), Asn-245, Ser-248, Gln-292, and 395 to 397 (WQL) contribute to the cob(II)alamin site.

It belongs to the eukaryotic cobalamin transport proteins family. Interacts with CD320 (via LDL-receptor class A domains).

The protein resides in the secreted. Functionally, primary vitamin B12-binding and transport protein. Delivers cobalamin to cells. The chain is Transcobalamin-2 (Tcn2) from Rattus norvegicus (Rat).